Here is a 131-residue protein sequence, read N- to C-terminus: Profilin-5 (131 aa).

Cys-13 and Cys-115 are disulfide-bonded. The short motif at Val-81–Thr-97 is the Involved in PIP2 interaction element. Position 111 is a phosphothreonine (Thr-111).

Belongs to the profilin family. As to quaternary structure, multimer. Occurs in many kinds of cells as a complex with monomeric actin in a 1:1 ratio. In terms of processing, phosphorylated by MAP kinases. In terms of tissue distribution, expressed in vegetative tissues. Present in shoots, roots and coleoptiles. Also detected in endosperm and pollen.

The protein localises to the cytoplasm. Its subcellular location is the cytoskeleton. Actin binding is enhanced by calcium Ca(2+). Functionally, binds to actin and affects the structure of the cytoskeleton. At high concentrations, profilin prevents the polymerization of actin, whereas it enhances it at low concentrations. By binding to PIP2, it inhibits the formation of IP3 and DG. Has a high affinity for poly-proline. The polypeptide is Profilin-5 (Zea mays (Maize)).